We begin with the raw amino-acid sequence, 443 residues long: Toxin YjjJ (443 aa).

The Proton acceptor role is filled by Asp342.

It belongs to the HipA Ser/Thr kinase family.

Toxic when overexpressed in E.coli, leading to long filamentous cells. The toxic effect is neutralized by non-cognate antitoxin HipB. Does not seem to inhibit DNA, RNA or protein synthesis, and unlike paralogous toxin HipA its toxic activity is not counteracted by overexpression of GltX. Binds DNA. Might be a protein kinase. This chain is Toxin YjjJ (yjjJ), found in Escherichia coli (strain K12).